We begin with the raw amino-acid sequence, 126 residues long: Large ribosomal subunit protein uL14m (126 aa).

It belongs to the universal ribosomal protein uL14 family. As to quaternary structure, component of the mitochondrial large ribosomal subunit (mt-LSU). Mature yeast 74S mitochondrial ribosomes consist of a small (37S) and a large (54S) subunit. The 37S small subunit contains a 15S ribosomal RNA (15S mt-rRNA) and at least 32 different proteins. The 54S large subunit contains a 21S rRNA (21S mt-rRNA) and at least 45 different proteins.

Its subcellular location is the mitochondrion. In terms of biological role, component of the mitochondrial ribosome (mitoribosome), a dedicated translation machinery responsible for the synthesis of mitochondrial genome-encoded proteins, including at least some of the essential transmembrane subunits of the mitochondrial respiratory chain. The mitoribosomes are attached to the mitochondrial inner membrane and translation products are cotranslationally integrated into the membrane. In Schizosaccharomyces pombe (strain 972 / ATCC 24843) (Fission yeast), this protein is Large ribosomal subunit protein uL14m (mrpl38).